Reading from the N-terminus, the 201-residue chain is LexA repressor 1 (201 aa).

Residues 27-47 constitute a DNA-binding region (H-T-H motif); that stretch reads LAEIAQAFGFASRNAAQKHVQ. Catalysis depends on for autocatalytic cleavage activity residues Ser122 and Lys159.

The protein belongs to the peptidase S24 family. As to quaternary structure, homodimer.

The enzyme catalyses Hydrolysis of Ala-|-Gly bond in repressor LexA.. Represses a number of genes involved in the response to DNA damage (SOS response), including recA and lexA. In the presence of single-stranded DNA, RecA interacts with LexA causing an autocatalytic cleavage which disrupts the DNA-binding part of LexA, leading to derepression of the SOS regulon and eventually DNA repair. In Xanthomonas axonopodis pv. citri (strain 306), this protein is LexA repressor 1.